The following is a 240-amino-acid chain: Proteasome subunit beta 1 (240 aa).

Positions 1 to 46 (MRDMTPGPDLSGPQAADEFQSDPYAPEVGELPEQSAQDSEKVNKTG) are cleaved as a propeptide — removed in mature form; by autocatalysis. The tract at residues 1–48 (MRDMTPGPDLSGPQAADEFQSDPYAPEVGELPEQSAQDSEKVNKTGTT) is disordered. The Nucleophile role is filled by threonine 47.

It belongs to the peptidase T1B family. The 20S proteasome core is composed of 14 alpha and 14 beta subunits that assemble into four stacked heptameric rings, resulting in a barrel-shaped structure. The two inner rings, each composed of seven catalytic beta subunits, are sandwiched by two outer rings, each composed of seven alpha subunits. The catalytic chamber with the active sites is on the inside of the barrel. Has a gated structure, the ends of the cylinder being occluded by the N-termini of the alpha-subunits. Is capped at one or both ends by the proteasome regulatory ATPase, PAN.

Its subcellular location is the cytoplasm. It carries out the reaction Cleavage of peptide bonds with very broad specificity.. The formation of the proteasomal ATPase PAN-20S proteasome complex, via the docking of the C-termini of PAN into the intersubunit pockets in the alpha-rings, triggers opening of the gate for substrate entry. Interconversion between the open-gate and close-gate conformations leads to a dynamic regulation of the 20S proteasome proteolysis activity. Its function is as follows. Component of the proteasome core, a large protease complex with broad specificity involved in protein degradation. In Haloarcula marismortui (strain ATCC 43049 / DSM 3752 / JCM 8966 / VKM B-1809) (Halobacterium marismortui), this protein is Proteasome subunit beta 1.